The primary structure comprises 279 residues: S-methyl-5'-thioadenosine phosphorylase (279 aa).

Phosphate is bound by residues serine 28, 70–71, and 103–104; these read RH and SA. Methionine 202 serves as a coordination point for substrate. Phosphate is bound at residue threonine 203. 226–228 is a binding site for substrate; it reads DYD.

The protein belongs to the PNP/MTAP phosphorylase family. MTAP subfamily. Homohexamer. Dimer of a homotrimer.

It carries out the reaction S-methyl-5'-thioadenosine + phosphate = 5-(methylsulfanyl)-alpha-D-ribose 1-phosphate + adenine. The protein operates within amino-acid biosynthesis; L-methionine biosynthesis via salvage pathway; S-methyl-5-thio-alpha-D-ribose 1-phosphate from S-methyl-5'-thioadenosine (phosphorylase route): step 1/1. Catalyzes the reversible phosphorylation of S-methyl-5'-thioadenosine (MTA) to adenine and 5-methylthioribose-1-phosphate. Involved in the breakdown of MTA, a major by-product of polyamine biosynthesis. Responsible for the first step in the methionine salvage pathway after MTA has been generated from S-adenosylmethionine. Has broad substrate specificity with 6-aminopurine nucleosides as preferred substrates. This is S-methyl-5'-thioadenosine phosphorylase from Pyrobaculum aerophilum (strain ATCC 51768 / DSM 7523 / JCM 9630 / CIP 104966 / NBRC 100827 / IM2).